The chain runs to 286 residues: ATP phosphoribosyltransferase (286 aa).

This sequence belongs to the ATP phosphoribosyltransferase family. Long subfamily. Requires Mg(2+) as cofactor.

Its subcellular location is the cytoplasm. It catalyses the reaction 1-(5-phospho-beta-D-ribosyl)-ATP + diphosphate = 5-phospho-alpha-D-ribose 1-diphosphate + ATP. It participates in amino-acid biosynthesis; L-histidine biosynthesis; L-histidine from 5-phospho-alpha-D-ribose 1-diphosphate: step 1/9. Feedback inhibited by histidine. Its function is as follows. Catalyzes the condensation of ATP and 5-phosphoribose 1-diphosphate to form N'-(5'-phosphoribosyl)-ATP (PR-ATP). Has a crucial role in the pathway because the rate of histidine biosynthesis seems to be controlled primarily by regulation of HisG enzymatic activity. The chain is ATP phosphoribosyltransferase from Paenarthrobacter aurescens (strain TC1).